Here is a 204-residue protein sequence, read N- to C-terminus: Large ribosomal subunit protein uL3c (204 aa).

The interval 126–155 is disordered; the sequence is HNFTRGPMTHGSKNHREPGSIGQGSTPAKV.

Belongs to the universal ribosomal protein uL3 family. As to quaternary structure, part of the 50S ribosomal subunit.

The protein resides in the plastid. It is found in the chloroplast. One of the primary rRNA binding proteins, it binds directly near the 3'-end of the 23S rRNA, where it nucleates assembly of the 50S subunit. The protein is Large ribosomal subunit protein uL3c (rpl3) of Guillardia theta (Cryptophyte).